The chain runs to 185 residues: MAAVIAKSSVSAAVARPARSSVRPMAALKPAVKAAPVAAPAQANQMMVWTPVNNKMFETFSYLPPLSDEQIAAQVDYIVANGWIPCLEFAESDKAYVSNESAIRFGSVSCLYYDNRYWTMWKLPMFGCRDPMQVLREIVACTKAFPDAYVRLVAFDNQKQVQIMGFLVQRPKSARDWQPANKRSV.

Residues 1–45 constitute a chloroplast transit peptide; it reads MAAVIAKSSVSAAVARPARSSVRPMAALKPAVKAAPVAAPAQANQ. Residue Met-46 is modified to N-methylmethionine.

This sequence belongs to the RuBisCO small chain family. As to quaternary structure, heterohexadecamer of 8 large and 8 small subunits.

The protein resides in the plastid. Its subcellular location is the chloroplast. The protein localises to the chloroplast stroma. Functionally, ruBisCO catalyzes two reactions: the carboxylation of D-ribulose 1,5-bisphosphate, the primary event in carbon dioxide fixation, as well as the oxidative fragmentation of the pentose substrate. Both reactions occur simultaneously and in competition at the same active site. Although the small subunit is not catalytic it is essential for maximal activity. This is Ribulose bisphosphate carboxylase small subunit, chloroplastic 2 from Chlamydomonas reinhardtii (Chlamydomonas smithii).